A 366-amino-acid chain; its full sequence is Methylthioribose-1-phosphate isomerase (366 aa).

Aspartate 260 acts as the Proton donor in catalysis.

Belongs to the eIF-2B alpha/beta/delta subunits family. MtnA subfamily.

The protein resides in the cytoplasm. The protein localises to the nucleus. The catalysed reaction is 5-(methylsulfanyl)-alpha-D-ribose 1-phosphate = 5-(methylsulfanyl)-D-ribulose 1-phosphate. It functions in the pathway amino-acid biosynthesis; L-methionine biosynthesis via salvage pathway; L-methionine from S-methyl-5-thio-alpha-D-ribose 1-phosphate: step 1/6. Its function is as follows. Catalyzes the interconversion of methylthioribose-1-phosphate (MTR-1-P) into methylthioribulose-1-phosphate (MTRu-1-P). The protein is Methylthioribose-1-phosphate isomerase of Caenorhabditis briggsae.